A 605-amino-acid chain; its full sequence is ATP-dependent RNA helicase DBP3 (605 aa).

The tract at residues M1 to K124 is disordered. Positions K54–K66 are enriched in basic residues. The span at P104–E114 shows a compositional bias: polar residues. The Q motif motif lies at L175–A201. Residues W204–I391 enclose the Helicase ATP-binding domain. A217–T224 provides a ligand contact to ATP. The DEAD box signature appears at D336–D339. The Helicase C-terminal domain occupies H424–P575.

Belongs to the DEAD box helicase family. DDX5/DBP2 subfamily.

The protein resides in the nucleus. It localises to the nucleolus. It catalyses the reaction ATP + H2O = ADP + phosphate + H(+). ATP-dependent RNA helicase required for 60S ribosomal subunit synthesis. Involved in efficient pre-rRNA processing, predominantly at site A3, which is necessary for the normal formation of 25S and 5.8S rRNAs. This chain is ATP-dependent RNA helicase DBP3 (DBP3), found in Cryptococcus neoformans var. neoformans serotype D (strain JEC21 / ATCC MYA-565) (Filobasidiella neoformans).